Reading from the N-terminus, the 175-residue chain is MTMYIAFILSTIFVIGFVGFSSKPSPIYGGLGLIVSGGVGCGIVLNFGGSFLGLMVFLIYLGGMLVVFGYTTAMATEMYPEVWVSNKTVFGAFVSGLMMEFCMVYYALKEEEVEIIFKFNGLGDWVIYDTGDSGFFSEEAMGIAALYSYGTWLVIVTGWSLLIGVVVIMEITRGN.

A run of 5 helical transmembrane segments spans residues 1–21 (MTMY…VGFS), 25–45 (SPIY…GIVL), 47–67 (FGGS…MLVV), 88–108 (TVFG…YYAL), and 149–169 (YGTW…VVIM).

This sequence belongs to the complex I subunit 6 family. Core subunit of respiratory chain NADH dehydrogenase (Complex I) which is composed of 45 different subunits.

The protein localises to the mitochondrion inner membrane. It carries out the reaction a ubiquinone + NADH + 5 H(+)(in) = a ubiquinol + NAD(+) + 4 H(+)(out). Its function is as follows. Core subunit of the mitochondrial membrane respiratory chain NADH dehydrogenase (Complex I) which catalyzes electron transfer from NADH through the respiratory chain, using ubiquinone as an electron acceptor. Essential for the catalytic activity and assembly of complex I. This Sus scrofa (Pig) protein is NADH-ubiquinone oxidoreductase chain 6 (MT-ND6).